The following is a 482-amino-acid chain: Cardiolipin synthase (482 aa).

2 consecutive transmembrane segments (helical) span residues 4–24 (LAYL…VTVF) and 34–54 (WAWL…YLIF). 2 PLD phosphodiesterase domains span residues 217 to 244 (LNYR…GDEY) and 395 to 422 (DNGF…DFRS). Active-site residues include His222, Lys224, Asp229, His400, Lys402, and Asp407.

Belongs to the phospholipase D family. Cardiolipin synthase subfamily.

It is found in the cell membrane. It catalyses the reaction 2 a 1,2-diacyl-sn-glycero-3-phospho-(1'-sn-glycerol) = a cardiolipin + glycerol. Its function is as follows. Catalyzes the reversible phosphatidyl group transfer from one phosphatidylglycerol molecule to another to form cardiolipin (CL) (diphosphatidylglycerol) and glycerol. In Listeria monocytogenes serotype 4a (strain HCC23), this protein is Cardiolipin synthase (cls).